The following is an 81-amino-acid chain: uncharacterized protein (81 aa).

This is an uncharacterized protein from Vaccinia virus (strain Copenhagen) (VACV).